The following is an 87-amino-acid chain: uncharacterized protein (87 aa).

This is an uncharacterized protein from Autographa californica nuclear polyhedrosis virus (AcMNPV).